Here is a 90-residue protein sequence, read N- to C-terminus: Small ribosomal subunit protein bS16 (90 aa).

The protein belongs to the bacterial ribosomal protein bS16 family.

This is Small ribosomal subunit protein bS16 from Geobacillus sp. (strain WCH70).